A 118-amino-acid polypeptide reads, in one-letter code: uncharacterized protein (118 aa).

Residues 49–80 (SKEEHTTSAANLHPRKKKRMPPRRAEKNKAPN) are disordered. Basic residues predominate over residues 61-70 (HPRKKKRMPP).

This is an uncharacterized protein from Saccharomyces cerevisiae (strain ATCC 204508 / S288c) (Baker's yeast).